We begin with the raw amino-acid sequence, 300 residues long: Acetylglutamate kinase (300 aa).

Substrate is bound by residues 72 to 73 (GG), R94, and N197.

This sequence belongs to the acetylglutamate kinase family. ArgB subfamily.

It is found in the cytoplasm. It catalyses the reaction N-acetyl-L-glutamate + ATP = N-acetyl-L-glutamyl 5-phosphate + ADP. It participates in amino-acid biosynthesis; L-arginine biosynthesis; N(2)-acetyl-L-ornithine from L-glutamate: step 2/4. Its function is as follows. Catalyzes the ATP-dependent phosphorylation of N-acetyl-L-glutamate. The polypeptide is Acetylglutamate kinase (Aromatoleum aromaticum (strain DSM 19018 / LMG 30748 / EbN1) (Azoarcus sp. (strain EbN1))).